The primary structure comprises 257 residues: 3-oxo-5-alpha-steroid 4-dehydrogenase 1 (257 aa).

The next 6 helical transmembrane spans lie at 7–27 (FLLDALAYLECALGVVCYVLL), 50–70 (AAWTVQELPSLALPLLACAGA), 84–104 (ILLAMFLVHYAQRSLVFPFLI), 109–129 (PMPLYAFLLAFIFCTYNGYLQ), 149–169 (FLTGSALWLIGMLINIHSDHV), and 208–228 (ALASWSIQGWAFAVFTFCVLF).

The protein belongs to the steroid 5-alpha reductase family.

It is found in the microsome membrane. The protein resides in the endoplasmic reticulum membrane. The catalysed reaction is a 3-oxo-5alpha-steroid + NADP(+) = a 3-oxo-Delta(4)-steroid + NADPH + H(+). It carries out the reaction 5alpha-pregnane-3,20-dione + NADP(+) = progesterone + NADPH + H(+). It catalyses the reaction 17beta-hydroxy-5alpha-androstan-3-one + NADP(+) = testosterone + NADPH + H(+). The enzyme catalyses androst-4-ene-3,17-dione + NADPH + H(+) = 5alpha-androstan-3,17-dione + NADP(+). Functionally, converts testosterone into 5-alpha-dihydrotestosterone and progesterone or corticosterone into their corresponding 5-alpha-3-oxosteroids. It plays a central role in sexual differentiation and androgen physiology. This chain is 3-oxo-5-alpha-steroid 4-dehydrogenase 1 (SRD5A1), found in Bos taurus (Bovine).